Here is a 235-residue protein sequence, read N- to C-terminus: Thiopurine S-methyltransferase (235 aa).

Residues W13, L48, E69, and R126 each coordinate S-adenosyl-L-methionine. Positions 199–235 are disordered; sequence PDPQNGAPRRVEHKVYQLTGKRPASPEADGRAAETED. The segment covering 226–235 has biased composition (basic and acidic residues); it reads ADGRAAETED.

It belongs to the class I-like SAM-binding methyltransferase superfamily. TPMT family.

It is found in the cytoplasm. The catalysed reaction is S-adenosyl-L-methionine + a thiopurine = S-adenosyl-L-homocysteine + a thiopurine S-methylether.. The protein is Thiopurine S-methyltransferase of Stutzerimonas stutzeri (strain A1501) (Pseudomonas stutzeri).